Reading from the N-terminus, the 367-residue chain is Phosphoribosylaminoimidazole-succinocarboxamide synthase (367 aa).

The protein belongs to the SAICAR synthetase family.

The enzyme catalyses 5-amino-1-(5-phospho-D-ribosyl)imidazole-4-carboxylate + L-aspartate + ATP = (2S)-2-[5-amino-1-(5-phospho-beta-D-ribosyl)imidazole-4-carboxamido]succinate + ADP + phosphate + 2 H(+). Its pathway is purine metabolism; IMP biosynthesis via de novo pathway; 5-amino-1-(5-phospho-D-ribosyl)imidazole-4-carboxamide from 5-amino-1-(5-phospho-D-ribosyl)imidazole-4-carboxylate: step 1/2. This Vibrio atlanticus (strain LGP32) (Vibrio splendidus (strain Mel32)) protein is Phosphoribosylaminoimidazole-succinocarboxamide synthase.